A 322-amino-acid polypeptide reads, in one-letter code: Malate dehydrogenase (322 aa).

NAD(+) contacts are provided by residues 10–15 (GSGQIG) and Asp34. Substrate is bound by residues Arg83 and Arg89. Residues Asn96 and 119–121 (ITN) contribute to the NAD(+) site. Asn121 and Arg152 together coordinate substrate. Residue His176 is the Proton acceptor of the active site.

It belongs to the LDH/MDH superfamily. MDH type 3 family.

The enzyme catalyses (S)-malate + NAD(+) = oxaloacetate + NADH + H(+). Its function is as follows. Catalyzes the reversible oxidation of malate to oxaloacetate. This is Malate dehydrogenase from Bradyrhizobium sp. (strain BTAi1 / ATCC BAA-1182).